Here is a 290-residue protein sequence, read N- to C-terminus: Aquaporin-12 (290 aa).

The next 2 helical transmembrane spans lie at 1-21 and 67-87; these read MASLNVSLCFFFATCAICEVA and FGPDLLLTLVFLLFLVHGVTF. Residues 93 to 95 carry the NPA 1 motif; it reads NPT. Transmembrane regions (helical) follow at residues 112–138, 158–178, and 191–211; these read LLKLSAQVLGAQAACALTQRCWAWELS, SVLQGMLVEGACTFFFHLSLL, and ALALLVTLMAYTAGPYTSAFF. Positions 212–214 match the NPA 2 motif; the sequence is NPA. A helical membrane pass occupies residues 228–248; it reads LLEYAHVYCLGPVAGMILAVL. A disordered region spans residues 271-290; the sequence is RTPRGKLSPGSVDAKMHKGE.

This sequence belongs to the MIP/aquaporin (TC 1.A.8) family. AQP11/AQP12 subfamily. In terms of tissue distribution, restricted to pancreatic acinar cells.

It localises to the membrane. Aquaporins facilitate the transport of water and small neutral solutes across cell membranes. The polypeptide is Aquaporin-12 (Aqp12) (Mus musculus (Mouse)).